The primary structure comprises 226 residues: Urease accessory protein UreG (226 aa).

Residues 1 to 26 form a disordered region; it reads MPPHFLDGQPHGHTDRPRRVRQPGEP. Residue 33–40 coordinates GTP; that stretch reads GPVGSGKT.

The protein belongs to the SIMIBI class G3E GTPase family. UreG subfamily. Homodimer. UreD, UreF and UreG form a complex that acts as a GTP-hydrolysis-dependent molecular chaperone, activating the urease apoprotein by helping to assemble the nickel containing metallocenter of UreC. The UreE protein probably delivers the nickel.

It is found in the cytoplasm. In terms of biological role, facilitates the functional incorporation of the urease nickel metallocenter. This process requires GTP hydrolysis, probably effectuated by UreG. The chain is Urease accessory protein UreG from Mycolicibacterium vanbaalenii (strain DSM 7251 / JCM 13017 / BCRC 16820 / KCTC 9966 / NRRL B-24157 / PYR-1) (Mycobacterium vanbaalenii).